We begin with the raw amino-acid sequence, 545 residues long: Chaperonin GroEL (545 aa).

ATP is bound by residues Thr-29–Pro-32, Lys-50, Asp-86–Thr-90, Gly-414, Asn-477–Ala-479, and Asp-493.

Belongs to the chaperonin (HSP60) family. Forms a cylinder of 14 subunits composed of two heptameric rings stacked back-to-back. Interacts with the co-chaperonin GroES.

The protein resides in the cytoplasm. It catalyses the reaction ATP + H2O + a folded polypeptide = ADP + phosphate + an unfolded polypeptide.. Together with its co-chaperonin GroES, plays an essential role in assisting protein folding. The GroEL-GroES system forms a nano-cage that allows encapsulation of the non-native substrate proteins and provides a physical environment optimized to promote and accelerate protein folding. This Campylobacter fetus subsp. fetus (strain 82-40) protein is Chaperonin GroEL.